The following is a 632-amino-acid chain: FAD-binding monooxygenase ausB (632 aa).

A disordered region spans residues 1-50 (MASAPEVESVKTPDPASTKTQHTSIAEIHTADQTWNNESNTRLPPNHRHH). Polar residues-rich tracts occupy residues 15 to 24 (PASTKTQHTS) and 31 to 43 (ADQTWNNESNTRL). Residues 116–119 (TWYW), 128–129 (DI), and Y134 contribute to the FAD site. 126–128 (MCD) is an NADP(+) binding site. Residues 269–275 (TGSTAIQ) and 292–293 (RT) each bind NADP(+).

This sequence belongs to the FAD-binding monooxygenase family. FAD serves as cofactor.

It carries out the reaction protoaustinoid A + AH2 + O2 = berkeleyone A + A + H2O. It participates in secondary metabolite biosynthesis; terpenoid biosynthesis. Its function is as follows. FAD-binding monooxygenase; part of the gene cluster that mediates the biosynthesis of calidodehydroaustin, a fungal meroterpenoid. The first step of the pathway is the synthesis of 3,5-dimethylorsellinic acid by the polyketide synthase ausA. 3,5-dimethylorsellinic acid is then prenylated by the polyprenyl transferase ausN. Further epoxidation by the FAD-dependent monooxygenase ausM and cyclization by the probable terpene cyclase ausL lead to the formation of protoaustinoid A. Protoaustinoid A is then oxidized to spiro-lactone preaustinoid A3 by the combined action of the FAD-binding monooxygenases ausB and ausC, and the dioxygenase ausE. Acid-catalyzed keto-rearrangement and ring contraction of the tetraketide portion of preaustinoid A3 by ausJ lead to the formation of preaustinoid A4. The aldo-keto reductase ausK, with the help of ausH, is involved in the next step by transforming preaustinoid A4 into isoaustinone which is in turn hydroxylated by the P450 monooxygenase ausI to form austinolide. The cytochrome P450 monooxygenase ausG modifies austinolide to austinol. Austinol is further acetylated to austin by the O-acetyltransferase ausP, which spontaneously changes to dehydroaustin. The cytochrome P450 monooxygenase ausR then converts dehydroaustin is into 7-dehydrodehydroaustin. The hydroxylation catalyzed by ausR permits the O-acetyltransferase ausQ to add an additional acetyl group to the molecule, leading to the formation of acetoxydehydroaustin. The short chain dehydrogenase ausT catalyzes the reduction of the double bond present between carbon atoms 1 and 2 to convert 7-dehydrodehydroaustin into 1,2-dihydro-7-hydroxydehydroaustin. AusQ catalyzes not only an acetylation reaction but also the addition of the PKS ausV diketide product to 1,2-dihydro-7-hydroxydehydroaustin, forming precalidodehydroaustin. Finally, the iron/alpha-ketoglutarate-dependent dioxygenase converts precalidodehydroaustin into calidodehydroaustin. The sequence is that of FAD-binding monooxygenase ausB from Aspergillus calidoustus.